The primary structure comprises 414 residues: Phospholipase A1-IIbeta (414 aa).

Lys-19 participates in a covalent cross-link: Glycyl lysine isopeptide (Lys-Gly) (interchain with G-Cter in ubiquitin). Residues Asp-191–Ile-217 adopt a coiled-coil conformation. The Acyl-ester intermediate role is filled by Ser-223. Active-site charge relay system residues include Ser-223, Asp-289, and His-326. Residues Asp-386–Pro-414 form a disordered region. Residues Lys-390–Asn-410 are a coiled coil. Positions Asn-392–Glu-401 are enriched in basic and acidic residues.

Belongs to the AB hydrolase superfamily. Lipase family.

It is found in the cytoplasm. Its function is as follows. Acylhydrolase that catalyzes the hydrolysis of phospholipids at the sn-1 position. In Arabidopsis thaliana (Mouse-ear cress), this protein is Phospholipase A1-IIbeta.